The chain runs to 81 residues: Cytotoxin 1 (81 aa).

The first 21 residues, 1-21, serve as a signal peptide directing secretion; sequence MKTLLLTLVVVTIVCLDLGYT. 4 disulfide bridges follow: C24/C42, C35/C59, C63/C74, and C75/C80.

It belongs to the three-finger toxin family. Short-chain subfamily. Type IA cytotoxin sub-subfamily. In terms of assembly, monomer in solution; Homodimer and oligomer in the presence of negatively charged lipids forming a pore with a size ranging between 20 and 30 Angstroms. Expressed by the venom gland.

The protein resides in the secreted. Its subcellular location is the target cell membrane. Its function is as follows. Basic protein that binds to cell membrane and depolarizes cardiomyocytes. It also shows lytic activities on many other cells, including red blood cells. Interaction with sulfatides in the cell membrane induces pore formation and cell internalization and is responsible for cytotoxicity in cardiomyocytes. It targets the mitochondrial membrane and induces mitochondrial swelling and fragmentation. It binds to the integrin alpha-V/beta-3 (ITGAV/ITGB3) with a moderate affinity and inhibits protein kinases C. It also binds with high affinity to heparin. It also causes skeletal muscle necrosis after intramuscular injection into mice. The protein is Cytotoxin 1 of Naja atra (Chinese cobra).